Reading from the N-terminus, the 139-residue chain is Ribulose bisphosphate carboxylase small subunit (139 aa).

This sequence belongs to the RuBisCO small chain family. As to quaternary structure, heterohexadecamer of 8 large and 8 small subunits.

Its subcellular location is the plastid. The protein localises to the chloroplast. In terms of biological role, ruBisCO catalyzes two reactions: the carboxylation of D-ribulose 1,5-bisphosphate, the primary event in carbon dioxide fixation, as well as the oxidative fragmentation of the pentose substrate in the photorespiration process. Both reactions occur simultaneously and in competition at the same active site. Although the small subunit is not catalytic it is essential for maximal activity. The protein is Ribulose bisphosphate carboxylase small subunit of Chrysotila carterae (Marine alga).